The primary structure comprises 241 residues: Geranylgeranylglyceryl phosphate synthase (241 aa).

Residues Asp-26 and Ser-52 each coordinate Mg(2+). Residues 172–178 (YFEAGSG), 204–205 (GG), and 226–227 (GT) contribute to the sn-glycerol 1-phosphate site.

Belongs to the GGGP/HepGP synthase family. Group II subfamily. Mg(2+) is required as a cofactor.

The protein localises to the cytoplasm. The enzyme catalyses sn-glycerol 1-phosphate + (2E,6E,10E)-geranylgeranyl diphosphate = sn-3-O-(geranylgeranyl)glycerol 1-phosphate + diphosphate. The protein operates within membrane lipid metabolism; glycerophospholipid metabolism. Functionally, prenyltransferase that catalyzes the transfer of the geranylgeranyl moiety of geranylgeranyl diphosphate (GGPP) to the C3 hydroxyl of sn-glycerol-1-phosphate (G1P). This reaction is the first ether-bond-formation step in the biosynthesis of archaeal membrane lipids. This chain is Geranylgeranylglyceryl phosphate synthase, found in Hyperthermus butylicus (strain DSM 5456 / JCM 9403 / PLM1-5).